The sequence spans 520 residues: NAD(P)H-quinone oxidoreductase subunit 2 (520 aa).

The next 14 membrane-spanning stretches (helical) occupy residues 15–35 (ILPE…DLIL), 42–62 (WIGY…YFQW), 79–99 (LSII…LMSI), 106–126 (GTAL…GMFV), 132–152 (LVMI…LTGY), 167–187 (LLIG…LYGL), 210–230 (LGAV…ISAA), 244–264 (PTPV…ALAI), 280–300 (FVFT…ALAQ), 306–326 (MLAY…IAGT), 334–354 (IFYL…IILF), 378–398 (LGLS…GFFG), 400–420 (IYLF…LGLV), and 466–486 (VGLV…NPLF).

The protein belongs to the complex I subunit 2 family. NDH-1 can be composed of about 15 different subunits; different subcomplexes with different compositions have been identified which probably have different functions.

It localises to the cellular thylakoid membrane. It carries out the reaction a plastoquinone + NADH + (n+1) H(+)(in) = a plastoquinol + NAD(+) + n H(+)(out). It catalyses the reaction a plastoquinone + NADPH + (n+1) H(+)(in) = a plastoquinol + NADP(+) + n H(+)(out). NDH-1 shuttles electrons from an unknown electron donor, via FMN and iron-sulfur (Fe-S) centers, to quinones in the respiratory and/or the photosynthetic chain. The immediate electron acceptor for the enzyme in this species is believed to be plastoquinone. Couples the redox reaction to proton translocation, and thus conserves the redox energy in a proton gradient. Cyanobacterial NDH-1 also plays a role in inorganic carbon-concentration. The polypeptide is NAD(P)H-quinone oxidoreductase subunit 2 (Trichormus variabilis (strain ATCC 29413 / PCC 7937) (Anabaena variabilis)).